The sequence spans 114 residues: Histone H3-3 (114 aa).

Basic residues predominate over residues 1–17 (NTGGKAPRKHIAHKQAK). A disordered region spans residues 1 to 32 (NTGGKAPRKHIAHKQAKKSSAAAATGGVKKPH). The segment covering 18 to 28 (KSSAAAATGGV) has biased composition (low complexity).

Belongs to the histone H3 family. The nucleosome is a histone octamer containing two molecules each of H2A, H2B, H3 and H4 assembled in one H3-H4 heterotetramer and two H2A-H2B heterodimers. The octamer wraps approximately 147 bp of DNA.

The protein localises to the nucleus. It is found in the chromosome. In terms of biological role, core component of nucleosome. Nucleosomes wrap and compact DNA into chromatin, limiting DNA accessibility to the cellular machineries which require DNA as a template. Histones thereby play a central role in transcription regulation, DNA repair, DNA replication and chromosomal stability. DNA accessibility is regulated via a complex set of post-translational modifications of histones, also called histone code, and nucleosome remodeling. The protein is Histone H3-3 (H3-3) of Stylonychia lemnae (Ciliate).